A 1499-amino-acid polypeptide reads, in one-letter code: DNA-directed RNA polymerase subunit beta' (1499 aa).

4 residues coordinate Zn(2+): Cys67, Cys69, Cys82, and Cys85. The Mg(2+) site is built by Asp499, Asp501, and Asp503. Zn(2+)-binding residues include Cys867, Cys943, Cys950, and Cys953.

This sequence belongs to the RNA polymerase beta' chain family. As to quaternary structure, the RNAP catalytic core consists of 2 alpha, 1 beta, 1 beta' and 1 omega subunit. When a sigma factor is associated with the core the holoenzyme is formed, which can initiate transcription. Mg(2+) is required as a cofactor. The cofactor is Zn(2+).

It catalyses the reaction RNA(n) + a ribonucleoside 5'-triphosphate = RNA(n+1) + diphosphate. Its function is as follows. DNA-dependent RNA polymerase catalyzes the transcription of DNA into RNA using the four ribonucleoside triphosphates as substrates. The chain is DNA-directed RNA polymerase subunit beta' from Prosthecochloris aestuarii (strain DSM 271 / SK 413).